A 751-amino-acid chain; its full sequence is E3 ubiquitin-protein ligase SMURF2 (751 aa).

The C2 domain maps to 1 to 119; it reads MSNQGSRRNG…TGYQRLDLCK (119 aa). Positions 157 to 190 constitute a WW 1 domain; sequence NDLPDGWEERRTASGRIQYLNHITRTTQWERPTR. Residues 214–226 show a composition bias toward polar residues; that stretch reads GTNGASCGQTSDP. Residues 214-236 are disordered; that stretch reads GTNGASCGQTSDPRISERRVRSQ. 2 WW domains span residues 251 to 284 and 297 to 330; these read PDLPEGYEQRTTQQGQVYFLHTQTGVSTWHDPRV and GPLPPGWEIRNTATGRVYFVDHNNRTTQFTDPRL. Residues 417 to 751 form the HECT domain; that stretch reads RPKDLWKRLM…IEETCGFAVE (335 aa). The active-site Glycyl thioester intermediate is Cys-719.

The protein resides in the nucleus. It localises to the cytoplasm. The protein localises to the cell membrane. It is found in the membrane raft. The enzyme catalyses S-ubiquitinyl-[E2 ubiquitin-conjugating enzyme]-L-cysteine + [acceptor protein]-L-lysine = [E2 ubiquitin-conjugating enzyme]-L-cysteine + N(6)-ubiquitinyl-[acceptor protein]-L-lysine.. The protein operates within protein modification; protein ubiquitination. Functionally, E3 ubiquitin-protein ligase which accepts ubiquitin from an E2 ubiquitin-conjugating enzyme in the form of a thioester and then directly transfers the ubiquitin to targeted substrates. The chain is E3 ubiquitin-protein ligase SMURF2 (smurf2) from Xenopus laevis (African clawed frog).